The sequence spans 191 residues: 3-isopropylmalate dehydratase small subunit (191 aa).

Belongs to the LeuD family. LeuD type 1 subfamily. As to quaternary structure, heterodimer of LeuC and LeuD.

It catalyses the reaction (2R,3S)-3-isopropylmalate = (2S)-2-isopropylmalate. It participates in amino-acid biosynthesis; L-leucine biosynthesis; L-leucine from 3-methyl-2-oxobutanoate: step 2/4. Functionally, catalyzes the isomerization between 2-isopropylmalate and 3-isopropylmalate, via the formation of 2-isopropylmaleate. This is 3-isopropylmalate dehydratase small subunit from Staphylococcus haemolyticus (strain JCSC1435).